The following is a 425-amino-acid chain: MTTVIKNGTVYQNGHLIKADVLIDGQKIKAIGTDLEGEEIIDASGMIVSPGLVDVHVHYRDPGQTYKEDIKTGSQAAARGGFTTVGAMPNVTPVPNTAELMDKMVRENQKKGLVHILQYGPVTNDETTDIIPDYAALKKAGAFALSNDGHGVQSAQTMYLAMQKAKENNLIIAAHAQDDSLFNKGIVNEGIAAEKLDLPPVTELAETTQIARDLLLAQKTGVHYHICHVSTKTSVELVRLAKARGIKVTCEVAPHHILLTDSDIPEDNAYFKMNPPLRSKEDQVALLVGLLDGTIDLIATDHAPHAKAEKQGGMRGAAFGITGSETAFSTLYTRFVKEEKVFTLEQLLSLLTDKPATVFGIENAGLLAPGENADIAIFDIEHQREIKEDDFKSKGVNTPFTGHKVYGETVMTFVDGKVVYQRGTK.

Zn(2+)-binding residues include histidine 56 and histidine 58. Residues 58–60 (HYR) and asparagine 90 contribute to the substrate site. The Zn(2+) site is built by aspartate 148, histidine 175, and histidine 228. Asparagine 274 contributes to the substrate binding site. Aspartate 301 provides a ligand contact to Zn(2+). The active site involves aspartate 301. Substrate is bound by residues histidine 305 and 319–320 (FG).

Belongs to the metallo-dependent hydrolases superfamily. DHOase family. Class I DHOase subfamily. Requires Zn(2+) as cofactor.

The catalysed reaction is (S)-dihydroorotate + H2O = N-carbamoyl-L-aspartate + H(+). The protein operates within pyrimidine metabolism; UMP biosynthesis via de novo pathway; (S)-dihydroorotate from bicarbonate: step 3/3. Catalyzes the reversible cyclization of carbamoyl aspartate to dihydroorotate. The sequence is that of Dihydroorotase from Lactobacillus johnsonii (strain CNCM I-12250 / La1 / NCC 533).